The chain runs to 392 residues: Neutrophil cytosol factor 1 (392 aa).

One can recognise a PX domain in the interval 4 to 125; sequence HFIRHIALLG…NFFKVRPDDL (122 aa). SH3 domains lie at 156–215 and 226–285; these read IILQ…PLDS and YAGE…KAGQ. Positions 290–392 are disordered; that stretch reads AKSQIKSRGA…STKRKLASAV (103 aa). Residues Ser-304 and Ser-305 each carry the phosphoserine modification. Residues 310-319 show a composition bias toward basic residues; that stretch reads HSIHQRSRKR. 3 positions are modified to phosphoserine: Ser-321, Ser-329, and Ser-348. Positions 376 to 385 are enriched in basic and acidic residues; sequence ILHRCSESTK.

Component of the phagocyte NADPH oxidase complex composed of an obligatory core heterodimer formed by the membrane proteins CYBA and CYBB and the cytosolic regulatory subunits NCF1/p47-phox, NCF2/p67-phox, NCF4/p40-phox and the small GTPase RAC1 or RAC2. Part of a cytosolic complex composed at least by NCF1, NCF2 and NCF4. Interacts (via C-terminus) with NCF2 (via the C-terminal SH3 domain). Interacts with NCF4. Interacts with CYBB. Interacts (via the second SH3 domain) with CYBA; interaction is phosphorylation-dependent. Interacts with NOXA1. Interacts with ADAM15. Interacts with TRAF4. Interacts with FASLG. Interacts with PARK7 (via C-terminus); the interaction is enhanced by LPS and modulates NCF1 phosphorylation and membrane translocation. Post-translationally, phosphorylated by PRKCD; phosphorylation induces activation of NCF1, leading to assembly and activation of the NADPH oxidase complex.

The protein resides in the cytoplasm. It localises to the cytosol. Its subcellular location is the membrane. Subunit of the phagocyte NADPH oxidase complex that mediates the transfer of electrons from cytosolic NADPH to O2 to produce the superoxide anion (O2(-)). In the activated complex, electrons are first transferred from NADPH to flavin adenine dinucleotide (FAD) and subsequently transferred via two heme molecules to molecular oxygen, producing superoxide through an outer-sphere reaction. Activation of the NADPH oxidase complex is initiated by the assembly of cytosolic subunits of the NADPH oxidase complex with the core NADPH oxidase complex to form a complex at the plasma membrane or phagosomal membrane. This activation process is initiated by phosphorylation dependent binding of the cytosolic NCF1/p47-phox subunit to the C-terminus of CYBA/p22-phox. The sequence is that of Neutrophil cytosol factor 1 from Bos taurus (Bovine).